The following is a 1116-amino-acid chain: uncharacterized protein (1116 aa).

Residues 3–20 (FFLTFLLFLFTLFSLFVY) traverse the membrane as a helical segment.

It is found in the membrane. This is an uncharacterized protein from Aquifex aeolicus (strain VF5).